The primary structure comprises 149 residues: Large ribosomal subunit protein uL13 (149 aa).

This sequence belongs to the universal ribosomal protein uL13 family. Part of the 50S ribosomal subunit.

In terms of biological role, this protein is one of the early assembly proteins of the 50S ribosomal subunit, although it is not seen to bind rRNA by itself. It is important during the early stages of 50S assembly. This Pelodictyon phaeoclathratiforme (strain DSM 5477 / BU-1) protein is Large ribosomal subunit protein uL13.